We begin with the raw amino-acid sequence, 492 residues long: Argininosuccinate lyase (492 aa).

It belongs to the lyase 1 family. Argininosuccinate lyase subfamily.

Its subcellular location is the cytoplasm. It catalyses the reaction 2-(N(omega)-L-arginino)succinate = fumarate + L-arginine. Its pathway is amino-acid biosynthesis; L-arginine biosynthesis; L-arginine from L-ornithine and carbamoyl phosphate: step 3/3. The protein is Argininosuccinate lyase of Methanoculleus marisnigri (strain ATCC 35101 / DSM 1498 / JR1).